The chain runs to 244 residues: MDLTVTHITHKETYKEPRDDDDDKQVVAEIMARSFIPTLITTIPWEGFHFAGHEIQITEGKDCYGAFVWPSALVLCYFLETHAKQYNMVDKNVIEIGAGTGLVSIVASLLGARVIATDLPELLGNLQYNISRNTKMKCKHLPQVKELSWGVALDRNFPRSSNNFDYILAADVVYAHPFLEELLMTFDHLCKETTIILWAMRFRLEKENKFVDKFKELFDLEEISSFPSLNIKLYKAMKKNRRSA.

Residues 1–20 (MDLTVTHITHKETYKEPRDD) form a disordered region. Residues 9–18 (THKETYKEPR) show a composition bias toward basic and acidic residues. Residues Trp69, 97–99 (GAG), Asp118, Trp149, and Ala170 contribute to the S-adenosyl-L-methionine site.

Belongs to the methyltransferase superfamily. METTL21 family.

In terms of biological role, protein-lysine methyltransferase. This Mus musculus (Mouse) protein is Protein-lysine methyltransferase METTL21E (Mettl21e).